The primary structure comprises 100 residues: Small ribosomal subunit protein uS14c (100 aa).

Belongs to the universal ribosomal protein uS14 family. Part of the 30S ribosomal subunit.

The protein resides in the plastid. The protein localises to the chloroplast. In terms of biological role, binds 16S rRNA, required for the assembly of 30S particles. This is Small ribosomal subunit protein uS14c from Gossypium barbadense (Sea Island cotton).